The sequence spans 275 residues: 3-methyl-2-oxobutanoate hydroxymethyltransferase (275 aa).

Mg(2+) is bound by residues D44 and D83. 3-methyl-2-oxobutanoate contacts are provided by residues 44–45 (DS), D83, and K113. E115 contacts Mg(2+). E182 serves as the catalytic Proton acceptor.

This sequence belongs to the PanB family. Homodecamer; pentamer of dimers. Mg(2+) serves as cofactor.

The protein localises to the cytoplasm. The catalysed reaction is 3-methyl-2-oxobutanoate + (6R)-5,10-methylene-5,6,7,8-tetrahydrofolate + H2O = 2-dehydropantoate + (6S)-5,6,7,8-tetrahydrofolate. It functions in the pathway cofactor biosynthesis; (R)-pantothenate biosynthesis; (R)-pantoate from 3-methyl-2-oxobutanoate: step 1/2. Catalyzes the reversible reaction in which hydroxymethyl group from 5,10-methylenetetrahydrofolate is transferred onto alpha-ketoisovalerate to form ketopantoate. The chain is 3-methyl-2-oxobutanoate hydroxymethyltransferase from Clostridium novyi (strain NT).